Here is a 302-residue protein sequence, read N- to C-terminus: uncharacterized protein (302 aa).

The signal sequence occupies residues 1 to 52; that stretch reads MLKKLKVVRLLVNHLIYCPSIFMPYSKNMKKKIWNKTSLGALFMLFGTALTA.

Belongs to the MG439/MG440 family.

This is an uncharacterized protein from Mycoplasma pneumoniae (strain ATCC 29342 / M129 / Subtype 1) (Mycoplasmoides pneumoniae).